The sequence spans 159 residues: 2-C-methyl-D-erythritol 2,4-cyclodiphosphate synthase (159 aa).

A divalent metal cation contacts are provided by D8 and H10. Residues 8-10 (DVH) and 34-35 (HS) contribute to the 4-CDP-2-C-methyl-D-erythritol 2-phosphate site. Position 42 (H42) interacts with a divalent metal cation. 4-CDP-2-C-methyl-D-erythritol 2-phosphate is bound by residues 56–58 (DIG), 61–65 (FPDTD), 100–106 (AQAPKML), 132–135 (TTTE), F139, and R142.

The protein belongs to the IspF family. Homotrimer. Requires a divalent metal cation as cofactor.

The catalysed reaction is 4-CDP-2-C-methyl-D-erythritol 2-phosphate = 2-C-methyl-D-erythritol 2,4-cyclic diphosphate + CMP. Its pathway is isoprenoid biosynthesis; isopentenyl diphosphate biosynthesis via DXP pathway; isopentenyl diphosphate from 1-deoxy-D-xylulose 5-phosphate: step 4/6. Functionally, involved in the biosynthesis of isopentenyl diphosphate (IPP) and dimethylallyl diphosphate (DMAPP), two major building blocks of isoprenoid compounds. Catalyzes the conversion of 4-diphosphocytidyl-2-C-methyl-D-erythritol 2-phosphate (CDP-ME2P) to 2-C-methyl-D-erythritol 2,4-cyclodiphosphate (ME-CPP) with a corresponding release of cytidine 5-monophosphate (CMP). This Salmonella typhimurium (strain LT2 / SGSC1412 / ATCC 700720) protein is 2-C-methyl-D-erythritol 2,4-cyclodiphosphate synthase.